A 456-amino-acid polypeptide reads, in one-letter code: MQQTVTYGAKWKQFLTIFTPIVITQLTLFSMTFFDTTMSGNYSNQALAGVAIGSSFWAPVNAAFSGLLMAITPIIAQLIGAKKEKQVKNTVHNGLYIALFLAFILILINFLVVPTILTHMPVTAEVAGIARHFLNGICIGIPAFFISAILRSFIDSLGLTRVTMLITLCTVPFNIFLNYCFIFGNFGFPEMGGAGSGYATGITYWLVVLVSVILIQTQTRLRKFGIFKGLTALRFSKIKEIIGIGVPNGLTILFETSIFSAVTILMGAFGTETIAAHQSANSVCTLLYAFPLSVASTLTILGGYETGAKRLKDAKQYRHIGMAAAIFIGCVNGAILFFFRDIIAGFYTNDPALSNLIMHFLVYAILFQFADAVLSPVLGALRGYKDVTVTSIVAFISYWLIGLPVGYGLSFTNLGPFGYWIGLSTGLFVAAFILSIRVRKTEQKLSFNTKDAEISS.

A run of 12 helical transmembrane segments spans residues 13-34 (QFLT…MTFF), 54-76 (SSFW…PIIA), 95-117 (LYIA…PTIL), 132-154 (HFLN…RSFI), 161-183 (RVTM…CFIF), 193-215 (GAGS…VILI), 244-266 (IGVP…TILM), 286-308 (LLYA…ETGA), 321-343 (GMAA…RDII), 358-380 (MHFL…VLGA), 387-409 (VTVT…GYGL), and 414-436 (LGPF…ILSI).

The protein belongs to the multi antimicrobial extrusion (MATE) (TC 2.A.66.1) family.

It localises to the cell membrane. Multidrug efflux pump. The sequence is that of Probable multidrug resistance protein NorM (norM) from Listeria monocytogenes serotype 4b (strain F2365).